The following is a 377-amino-acid chain: Putative F-box only protein 10 (377 aa).

The region spanning 1–46 (MVSVNLPWELVEEILYRVPPQSLARFRTVCKQWNSLFDDNKFVNDH) is the F-box domain.

The chain is Putative F-box only protein 10 (FBX10) from Arabidopsis thaliana (Mouse-ear cress).